A 162-amino-acid polypeptide reads, in one-letter code: uncharacterized protein (162 aa).

Residues 5-25 traverse the membrane as a helical segment; the sequence is IIILFLFTAILCSITLCGCIS.

The protein resides in the membrane. This is an uncharacterized protein from Methanocaldococcus jannaschii (strain ATCC 43067 / DSM 2661 / JAL-1 / JCM 10045 / NBRC 100440) (Methanococcus jannaschii).